The following is a 554-amino-acid chain: MAAAPATLALDPQPQEKQKDASESSELSRLRAELAGALAEMETMKAVAEVSESTKAEAVAAVQRQCQEEVASLQAILKDSISSYETQIAALKQERQQQQQDFEEKDRELGHLKQLLARAHPLDSLEKQMEKAHEDSEKLREIVLPMEQEITELKGKLQRAEELIQEIQRRPRQPASLHGSTELLPLSRNPSPPLEPLEEPSGDAGPAAEAFAHNCDDSASISSFSLGGAAGSASLRGPQGLSPEQEETASLVSTGTLVPEGIFLPPPGYQLVPDSQWEQLQVEGRQLQKELESVSRERDELQEGLRRSNEDCAKQMQVLLAQVQNSEQLLRTLQGTVSQAQERVQLQMAELATSHKCLSQEVKRLNEENQGLRAEQLPSSALQGSEQREDQDEALPSSIQELHLLVQNTRQQARARQQAQEHEAERLRIEIVKLREALDEETAAKASLERQLRVQREETDVLEASLCSLRIETERVQQEQRKAQLTDLLSEQRAKTLRLQAELETSEQVQRDFVRLSQALQVRLERIRQAETLQQVRSILDEAPLRDIRDIKDS.

Disordered regions lie at residues Met-1–Ser-28, Ile-167–Ala-208, and Gly-371–Leu-395. Residues Pro-14 to Ser-28 are compositionally biased toward basic and acidic residues. The stretch at Gln-15–Gln-173 forms a coiled coil. Phosphoserine occurs at positions 176, 180, 187, and 191. Residues Asp-274–Val-509 are a coiled coil.

It belongs to the rabaptin family. As to quaternary structure, heterodimer with RABGEF1. The dimer binds RAB5A that has been activated by GTP-binding. Interacts with SDCCAG8; this interaction is important for ciliogenesis regulation. Interacts with RAB4A; this interaction may mediate VEGFR2 cell surface expression.

It is found in the cytoplasm. Its subcellular location is the early endosome. The protein resides in the cytoskeleton. The protein localises to the microtubule organizing center. It localises to the centrosome. It is found in the cilium basal body. Functionally, plays a role in membrane trafficking and in homotypic early endosome fusion. Participates in arteriogenesis by regulating vascular endothelial growth factor receptor 2/VEGFR2 cell surface expression and endosomal trafficking. By interacting with SDCCAG8, localizes to centrosomes and plays a critical role in ciliogenesis. In Mus musculus (Mouse), this protein is Rab GTPase-binding effector protein 2 (Rabep2).